A 430-amino-acid polypeptide reads, in one-letter code: Gamma-glutamyl phosphate reductase (430 aa).

The protein belongs to the gamma-glutamyl phosphate reductase family.

It is found in the cytoplasm. The enzyme catalyses L-glutamate 5-semialdehyde + phosphate + NADP(+) = L-glutamyl 5-phosphate + NADPH + H(+). It functions in the pathway amino-acid biosynthesis; L-proline biosynthesis; L-glutamate 5-semialdehyde from L-glutamate: step 2/2. Catalyzes the NADPH-dependent reduction of L-glutamate 5-phosphate into L-glutamate 5-semialdehyde and phosphate. The product spontaneously undergoes cyclization to form 1-pyrroline-5-carboxylate. This chain is Gamma-glutamyl phosphate reductase, found in Psychrobacter arcticus (strain DSM 17307 / VKM B-2377 / 273-4).